The sequence spans 85 residues: MNSLLMITACLVLFGTVWAKEGYLVNTYTGCKYICWKLGENKYCIDECKEIGAGYGYCYGFGCYCEGFPENKPTWPLPNKTCGRK.

Positions 1–19 (MNSLLMITACLVLFGTVWA) are cleaved as a signal peptide. One can recognise an LCN-type CS-alpha/beta domain in the interval 20 to 83 (KEGYLVNTYT…TWPLPNKTCG (64 aa)). Cystine bridges form between C31–C82, C35–C58, C44–C63, and C48–C65.

This sequence belongs to the long (4 C-C) scorpion toxin superfamily. Sodium channel inhibitor family. Beta subfamily. As to expression, expressed by the venom gland.

It localises to the secreted. Its function is as follows. Beta toxins bind voltage-independently at site-4 of sodium channels (Nav) and shift the voltage of activation toward more negative potentials thereby affecting sodium channel activation and promoting spontaneous and repetitive firing. This chain is Toxin Cll7, found in Centruroides limpidus (Mexican scorpion).